The chain runs to 340 residues: 4-dimethylallyltryptophan N-methyltransferase ifgB (340 aa).

It belongs to the methyltransferase superfamily. Homodimer.

The catalysed reaction is 4-(3-methylbut-2-enyl)-L-tryptophan + S-adenosyl-L-methionine = 4-(3-methylbut-2-enyl)-L-abrine + S-adenosyl-L-homocysteine + H(+). It participates in alkaloid biosynthesis; ergot alkaloid biosynthesis. 4-dimethylallyltryptophan N-methyltransferase; part of the gene cluster that mediates the biosynthesis of isofumigaclavines, fungal ergot alkaloids. The tryptophan dimethylallyltransferase ifgA catalyzes the first step of ergot alkaloid biosynthesis by condensing dimethylallyl diphosphate (DMAP) and tryptophan to form 4-dimethylallyl-L-tryptophan. The second step is catalyzed by the methyltransferase ifgB that methylates 4-dimethylallyl-L-tryptophan in the presence of S-adenosyl-L-methionine, resulting in the formation of N-methyl-dimethylallyl-L-tryptophan. The catalase ifgD and the FAD-dependent oxidoreductase ifgC then transform N-methyl-dimethylallyl-L-tryptophan to chanoclavine-I which is further oxidized by ifgE in the presence of NAD(+), resulting in the formation of chanoclavine-I aldehyde. The chanoclavine-I aldehyde reductases ifgG and/or fgaOx3 reduce chanoclavine-I aldehyde to dihydrochanoclavine-I aldehyde that spontaneously dehydrates to form 6,8-dimethyl-6,7-didehydroergoline. The festuclavine dehydrogenases ifgF1 and/or ifgF2 then catalyze the reduction of 6,8-dimethyl-6,7-didehydroergoline to form festuclavine. Hydrolysis of festuclavine by a yet undetermined cytochrome P450 monooxygenase (called ifgH) then leads to the formation of isofumigaclavine B which is in turn acetylated by ifgI to isofumigaclavine A. Penicillium roqueforti has interestingly at least two sets of genes for the consumption of chanoclavine-I aldehyde on three different loci, the OYEs ifgG/fgaOx3 and the festuclavine synthase homologs ifgF1/ifgF2. The reason for the duplication of these genes is unclear, probably to ensure the conversion of chanoclavine-I aldehyde by differential gene expression under various environmental conditions. The sequence is that of 4-dimethylallyltryptophan N-methyltransferase ifgB from Penicillium roqueforti (strain FM164).